The following is a 453-amino-acid chain: GTPase Der (453 aa).

EngA-type G domains lie at 4 to 169 and 177 to 352; these read PIVA…PPVT and IKIA…EEHK. Residues 10-17, 57-61, 120-123, 183-190, 230-234, and 295-298 each bind GTP; these read GRPNVGKS, DTGGL, NKCE, DTAGI, and NKWD. A KH-like domain is found at 353-438; sequence RRVSTSVINE…PIRLLWRSKK (86 aa).

This sequence belongs to the TRAFAC class TrmE-Era-EngA-EngB-Septin-like GTPase superfamily. EngA (Der) GTPase family. In terms of assembly, associates with the 50S ribosomal subunit.

In terms of biological role, GTPase that plays an essential role in the late steps of ribosome biogenesis. This is GTPase Der from Nostoc sp. (strain PCC 7120 / SAG 25.82 / UTEX 2576).